We begin with the raw amino-acid sequence, 149 residues long: 3-dehydroquinate dehydratase (149 aa).

Tyr26 acts as the Proton acceptor in catalysis. Asn77, His83, and Asp90 together coordinate substrate. His103 functions as the Proton donor in the catalytic mechanism. Residues 104–105 and Arg114 each bind substrate; that span reads LS.

This sequence belongs to the type-II 3-dehydroquinase family. In terms of assembly, homododecamer.

It carries out the reaction 3-dehydroquinate = 3-dehydroshikimate + H2O. The protein operates within metabolic intermediate biosynthesis; chorismate biosynthesis; chorismate from D-erythrose 4-phosphate and phosphoenolpyruvate: step 3/7. Functionally, catalyzes a trans-dehydration via an enolate intermediate. In Haemophilus influenzae (strain ATCC 51907 / DSM 11121 / KW20 / Rd), this protein is 3-dehydroquinate dehydratase (aroQ).